A 245-amino-acid polypeptide reads, in one-letter code: Thiopurine S-methyltransferase (245 aa).

An S-adenosyl-L-methionine-binding site is contributed by 29–40 (WREKWVDGKIGF). F40 is a binding site for substrate. The residue at position 58 (K58) is an N6-acetyllysine. S-adenosyl-L-methionine contacts are provided by L69, E90, and R152.

Belongs to the class I-like SAM-binding methyltransferase superfamily. TPMT family. Monomer.

Its subcellular location is the cytoplasm. The enzyme catalyses S-adenosyl-L-methionine + a thiopurine = S-adenosyl-L-homocysteine + a thiopurine S-methylether.. The sequence is that of Thiopurine S-methyltransferase (TPMT) from Panthera pardus (Leopard).